The chain runs to 212 residues: Leucyl/phenylalanyl-tRNA--protein transferase (212 aa).

Belongs to the L/F-transferase family.

It localises to the cytoplasm. The catalysed reaction is N-terminal L-lysyl-[protein] + L-leucyl-tRNA(Leu) = N-terminal L-leucyl-L-lysyl-[protein] + tRNA(Leu) + H(+). It catalyses the reaction N-terminal L-arginyl-[protein] + L-leucyl-tRNA(Leu) = N-terminal L-leucyl-L-arginyl-[protein] + tRNA(Leu) + H(+). It carries out the reaction L-phenylalanyl-tRNA(Phe) + an N-terminal L-alpha-aminoacyl-[protein] = an N-terminal L-phenylalanyl-L-alpha-aminoacyl-[protein] + tRNA(Phe). Its function is as follows. Functions in the N-end rule pathway of protein degradation where it conjugates Leu, Phe and, less efficiently, Met from aminoacyl-tRNAs to the N-termini of proteins containing an N-terminal arginine or lysine. This chain is Leucyl/phenylalanyl-tRNA--protein transferase, found in Christiangramia forsetii (strain DSM 17595 / CGMCC 1.15422 / KT0803) (Gramella forsetii).